A 568-amino-acid chain; its full sequence is uncharacterized protein (568 aa).

Over residues 334–346 the composition is skewed to basic and acidic residues; it reads DDNEEKNNDRPKI. Disordered stretches follow at residues 334–382 and 436–479; these read DDNE…NDQN and QVEE…SCKN. A compositionally biased stretch (low complexity) spans 458–477; it reads KIASSASKNDNSNNKNSKSC.

The protein to yeast YJL043w.

This is an uncharacterized protein from Saccharomyces cerevisiae (strain ATCC 204508 / S288c) (Baker's yeast).